Here is a 129-residue protein sequence, read N- to C-terminus: Photosystem II reaction center Psb28 protein (129 aa).

Residues 110–129 (GLGYSNNSGNNEGADEASEG) form a disordered region.

This sequence belongs to the Psb28 family. As to quaternary structure, part of the photosystem II complex.

The protein localises to the cellular thylakoid membrane. The sequence is that of Photosystem II reaction center Psb28 protein from Synechococcus sp. (strain WH7803).